Reading from the N-terminus, the 30-residue chain is L-serine dehydratase, alpha chain (30 aa).

It belongs to the iron-sulfur dependent L-serine dehydratase family. As to quaternary structure, heterodimer of an alpha chain and a beta chain. [4Fe-4S] cluster is required as a cofactor.

The enzyme catalyses L-serine = pyruvate + NH4(+). Its pathway is carbohydrate biosynthesis; gluconeogenesis. The polypeptide is L-serine dehydratase, alpha chain (Anaerotignum propionicum (Clostridium propionicum)).